The following is a 413-amino-acid chain: MAPPSVFAEVPQAQPVLVFKLTADFREDPDPRKVNLGVGAYRTDDCHPWVLPVVKKVEQKIANDNSLNHEYLPILGLAEFRSCASRLALGDDSPALKEKRVGGVQSLGGTGALRIGADFLARWYNGTNNKNTPVYVSSPTWENHNAVFSAAGFKDIRSYRYWDAEKRGLDLQGLLNDLENAPEFSIVVLHACAHNPTGTDPTPEQWKQIASVMKHRFLFPFFDSAYQGFASGNLERDAWAIRYFVSEGFEFFCAQSFSKNFGLYNERVGNLTVVGKEPEGILRVLSQMEKIVRITWSNPPAQGARIVASTLSNPELFEEWTGNVKTMADRILTMRSELRARLEALKTPGTWNHITDQIGMFSFTGLNPKQVEYLINEKHIYLLPSGRINVSGLTTKNLDYVATSIHEAVTKIQ.

Positions 39 and 141 each coordinate L-aspartate. At serine 149 the chain carries Phosphoserine. Asparagine 195 provides a ligand contact to L-aspartate. An N6-(pyridoxal phosphate)lysine modification is found at lysine 259. Arginine 387 lines the L-aspartate pocket.

The protein belongs to the class-I pyridoxal-phosphate-dependent aminotransferase family. As to quaternary structure, homodimer. Requires pyridoxal 5'-phosphate as cofactor.

Its subcellular location is the cytoplasm. The enzyme catalyses L-aspartate + 2-oxoglutarate = oxaloacetate + L-glutamate. The catalysed reaction is L-cysteine + 2-oxoglutarate = 2-oxo-3-sulfanylpropanoate + L-glutamate. It catalyses the reaction (2S)-2-aminobutanoate + 2-oxoglutarate = 2-oxobutanoate + L-glutamate. It carries out the reaction 3-sulfino-L-alanine + 2-oxoglutarate = 3-sulfinopyruvate + L-glutamate. Biosynthesis of L-glutamate from L-aspartate or L-cysteine. Important regulator of levels of glutamate, the major excitatory neurotransmitter of the vertebrate central nervous system. Acts as a scavenger of glutamate in brain neuroprotection. The aspartate aminotransferase activity is involved in hepatic glucose synthesis during development and in adipocyte glyceroneogenesis. Using L-cysteine as substrate, regulates levels of mercaptopyruvate, an important source of hydrogen sulfide. Mercaptopyruvate is converted into H(2)S via the action of 3-mercaptopyruvate sulfurtransferase (3MST). Hydrogen sulfide is an important synaptic modulator and neuroprotectant in the brain. The protein is Aspartate aminotransferase, cytoplasmic of Pongo abelii (Sumatran orangutan).